A 172-amino-acid polypeptide reads, in one-letter code: Ribosome maturation factor RimM (172 aa).

Positions 96–168 (DGEFYYHEII…RVDVELLEGL (73 aa)) constitute a PRC barrel domain.

It belongs to the RimM family. As to quaternary structure, binds ribosomal protein uS19.

The protein resides in the cytoplasm. In terms of biological role, an accessory protein needed during the final step in the assembly of 30S ribosomal subunit, possibly for assembly of the head region. Essential for efficient processing of 16S rRNA. May be needed both before and after RbfA during the maturation of 16S rRNA. It has affinity for free ribosomal 30S subunits but not for 70S ribosomes. This is Ribosome maturation factor RimM from Streptococcus suis (strain 05ZYH33).